A 497-amino-acid polypeptide reads, in one-letter code: Di-/tripeptide transporter (497 aa).

At 1–36 (MQNLNKTEKTFFGQPRGLLTLFQTEFWERFSYYGMR) the chain is on the cytoplasmic side. The chain crosses the membrane as a helical span at residues 37 to 55 (AILVYYLYALTTADNAGLG). Residues 56 to 64 (LPKAQAMAI) lie on the Extracellular side of the membrane. The chain crosses the membrane as a helical span at residues 65–83 (VSIYGALVYLSTIVGGWVA). Over 84-92 (DRLLGASRT) the chain is Cytoplasmic. A helical membrane pass occupies residues 93–111 (IFLGGILITLGHIALATPF). Residues 112–115 (GLSS) lie on the Extracellular side of the membrane. A helical membrane pass occupies residues 116–134 (LFVALFLIILGTGMLKPNI). Over 135-154 (SNMVGHLYSKDDSRRDTGFN) the chain is Cytoplasmic. Residues 155 to 173 (IFVVGINMGSLIAPLIVGT) form a helical membrane-spanning segment. Over 174–181 (VGQGVNYH) the chain is Extracellular. The helical transmembrane segment at 182–200 (LGFSLAAIGMIFALFAYWY) threads the bilayer. The Cytoplasmic portion of the chain corresponds to 201-224 (GRLRHFPEIGREPSNPMDSKARRN). A helical membrane pass occupies residues 225-243 (FLITLTIVVIVAIIGFFLL). Topologically, residues 244–254 (YQASPANFINN) are extracellular. The helical transmembrane segment at 255–273 (FINVLSIIGIVVPIIYFVM) threads the bilayer. The Cytoplasmic segment spans residues 274-293 (MFTSKKVESDERRKLTAYIP). Residues 294–312 (LFLSAIVFWAIEEQSSTII) traverse the membrane as a helical segment. The Extracellular portion of the chain corresponds to 313–335 (AVWGESRSNLDPTWFGITFHIDP). Residues 336–354 (SWYQLLNPLFIVLLSPIFV) form a helical membrane-spanning segment. The Cytoplasmic segment spans residues 355–372 (RLWNKLGERQPSTIVKFG). A helical membrane pass occupies residues 373 to 391 (LGLMLTGISYLIMTLPGLL). The Extracellular segment spans residues 392–425 (NGTSGRASALWLVLMFAVQMAGELLVSPVGLSVS). A helical membrane pass occupies residues 426 to 444 (TKLAPVAFQSQMMAMWFLA). Over 445–497 (DSTSQAINAQITPLFKAATEVHFFAITGIIGIIVGIILLIVKKPILKLMGDVR) the chain is Cytoplasmic.

Belongs to the major facilitator superfamily. Proton-dependent oligopeptide transporter (POT/PTR) (TC 2.A.17) family.

It localises to the cell membrane. Its function is as follows. Proton-dependent uptake of di- or tri-peptides. This chain is Di-/tripeptide transporter (dtpT), found in Lactococcus lactis subsp. lactis (strain IL1403) (Streptococcus lactis).